The sequence spans 308 residues: Glutamyl-Q tRNA(Asp) synthetase (308 aa).

Residues 19–23 and Glu-55 each bind L-glutamate; that span reads RFAPS. Positions 22–32 match the 'HIGH' region motif; the sequence is PSPSGELHFGS. Cys-111, Cys-113, Tyr-125, and Cys-129 together coordinate Zn(2+). Residues Tyr-182 and Arg-200 each contribute to the L-glutamate site. The short motif at 238-242 is the 'KMSKS' region element; it reads KLSKQ. Lys-241 is a binding site for ATP.

Belongs to the class-I aminoacyl-tRNA synthetase family. GluQ subfamily. Zn(2+) is required as a cofactor.

Functionally, catalyzes the tRNA-independent activation of glutamate in presence of ATP and the subsequent transfer of glutamate onto a tRNA(Asp). Glutamate is transferred on the 2-amino-5-(4,5-dihydroxy-2-cyclopenten-1-yl) moiety of the queuosine in the wobble position of the QUC anticodon. This Escherichia coli (strain K12 / MC4100 / BW2952) protein is Glutamyl-Q tRNA(Asp) synthetase.